The chain runs to 185 residues: Elongation factor P (185 aa).

It belongs to the elongation factor P family.

The protein resides in the cytoplasm. The protein operates within protein biosynthesis; polypeptide chain elongation. Functionally, involved in peptide bond synthesis. Stimulates efficient translation and peptide-bond synthesis on native or reconstituted 70S ribosomes in vitro. Probably functions indirectly by altering the affinity of the ribosome for aminoacyl-tRNA, thus increasing their reactivity as acceptors for peptidyl transferase. This Bacillus cereus (strain G9842) protein is Elongation factor P.